Consider the following 239-residue polypeptide: Prolyl hydroxylase EGLN3 (239 aa).

The segment at 62–73 (AGPRAGVSKRHL) is beta(2)beta(3) 'finger-like' loop. The required for interaction with ADRB2 stretch occupies residues 88–104 (CEAINFLLSLIDRLVLY). The Fe2OG dioxygenase domain occupies 116-214 (ERSKAMVACY…RYAMTVWYFD (99 aa)). Fe cation-binding residues include H135, D137, and H196. A 2-oxoglutarate-binding site is contributed by R205.

As to quaternary structure, interacts with ADRB2; the interaction hydroxylates ADRB2 facilitating its ubiquitination by the VHL-E3 ligase complex. Interacts with PAX2; the interaction targets PAX2 for destruction. Interacts with PKM; the interaction hydroxylates PKM in hypoxia. Interacts with WDR83; the interaction leads to almost complete elimination of HIF-mediated reporter activity. Interacts with BCL2 (via its BH4 domain); the interaction disrupts the BAX-BCL4 complex inhibiting the anti-apoptotic activity of BCL2. Fe(2+) serves as cofactor. Requires L-ascorbate as cofactor. In terms of processing, ubiquitinated by SIAH1 and/or SIAH2 in response to the unfolded protein response (UPR), leading to its degradation. Highly expressed in vascular smooth muscle. Moderately expressed in esophagus, stomach, small bowel and aorta. Low levels in tail and kidney. Expression also in pheochromocytoma cell line PC-12.

It localises to the nucleus. It is found in the cytoplasm. It carries out the reaction L-prolyl-[protein] + 2-oxoglutarate + O2 = trans-4-hydroxy-L-prolyl-[protein] + succinate + CO2. It catalyses the reaction L-prolyl-[hypoxia-inducible factor alpha subunit] + 2-oxoglutarate + O2 = trans-4-hydroxy-L-prolyl-[hypoxia-inducible factor alpha subunit] + succinate + CO2. Functionally, prolyl hydroxylase that mediates hydroxylation of proline residues in target proteins, such as PKM, TELO2, ATF4 and HIF1A. Target proteins are preferentially recognized via a LXXLAP motif. Cellular oxygen sensor that catalyzes, under normoxic conditions, the post-translational formation of 4-hydroxyproline in hypoxia-inducible factor (HIF) alpha proteins. Hydroxylates a specific proline found in each of the oxygen-dependent degradation (ODD) domains (N-terminal, NODD, and C-terminal, CODD) of HIF1A. Also hydroxylates HIF2A. Has a preference for the CODD site for both HIF1A and HIF2A. Hydroxylation on the NODD site by EGLN3 appears to require prior hydroxylation on the CODD site. Hydroxylated HIFs are then targeted for proteasomal degradation via the von Hippel-Lindau ubiquitination complex. Under hypoxic conditions, the hydroxylation reaction is attenuated allowing HIFs to escape degradation resulting in their translocation to the nucleus, heterodimerization with HIF1B, and increased expression of hypoxy-inducible genes. ELGN3 is the most important isozyme in limiting physiological activation of HIFs (particularly HIF2A) in hypoxia. Also hydroxylates PKM in hypoxia, limiting glycolysis. Under normoxia, hydroxylates and regulates the stability of ADRB2. Regulator of cardiomyocyte and neuronal apoptosis. In cardiomyocytes, inhibits the anti-apoptotic effect of BCL2 by disrupting the BAX-BCL2 complex. In neurons, has a NGF-induced proapoptotic effect, probably through regulating CASP3 activity. Also essential for hypoxic regulation of neutrophilic inflammation. Plays a crucial role in DNA damage response (DDR) by hydroxylating TELO2, promoting its interaction with ATR which is required for activation of the ATR/CHK1/p53 pathway. Also mediates hydroxylation of ATF4, leading to decreased protein stability of ATF4. The chain is Prolyl hydroxylase EGLN3 (Egln3) from Rattus norvegicus (Rat).